The primary structure comprises 85 residues: Large ribosomal subunit protein bL27 (85 aa).

The disordered stretch occupies residues 1–21; it reads MAHKKGQGSTQNNRDSAGRRL.

It belongs to the bacterial ribosomal protein bL27 family.

The protein is Large ribosomal subunit protein bL27 of Wolinella succinogenes (strain ATCC 29543 / DSM 1740 / CCUG 13145 / JCM 31913 / LMG 7466 / NCTC 11488 / FDC 602W) (Vibrio succinogenes).